The chain runs to 121 residues: Protein yippee-like 5 (121 aa).

The 98-residue stretch at 13–110 folds into the Yippee domain; it reads RLFSCANCDA…LERALVRESE (98 aa). Cysteine 17, cysteine 20, cysteine 73, and cysteine 76 together coordinate Zn(2+). At serine 118 the chain carries Phosphoserine.

It belongs to the yippee family. In terms of assembly, identified in the CTLH complex that contains GID4, RANBP9 and/or RANBP10, MKLN1, MAEA, RMND5A (or alternatively its paralog RMND5B), GID8, ARMC8, WDR26 and YPEL5. Within this complex, MAEA, RMND5A (or alternatively its paralog RMND5B), GID8, WDR26, and RANBP9 and/or RANBP10 form the catalytic core, while GID4, MKLN1, ARMC8 and YPEL5 have ancillary roles. Interacts with RANBP9 and RANBP10.

It is found in the nucleus. The protein localises to the cytoplasm. Its subcellular location is the cytoskeleton. The protein resides in the microtubule organizing center. It localises to the centrosome. It is found in the spindle pole. The protein localises to the midbody. Component of the CTLH E3 ubiquitin-protein ligase complex that selectively accepts ubiquitin from UBE2H and mediates ubiquitination and subsequent proteasomal degradation of the transcription factor HBP1. Required for normal cell proliferation. The protein is Protein yippee-like 5 (YPEL5) of Macaca fascicularis (Crab-eating macaque).